Reading from the N-terminus, the 294-residue chain is ATP synthase gamma chain (294 aa).

It belongs to the ATPase gamma chain family. In terms of assembly, F-type ATPases have 2 components, CF(1) - the catalytic core - and CF(0) - the membrane proton channel. CF(1) has five subunits: alpha(3), beta(3), gamma(1), delta(1), epsilon(1). CF(0) has three main subunits: a, b and c.

The protein localises to the cell inner membrane. In terms of biological role, produces ATP from ADP in the presence of a proton gradient across the membrane. The gamma chain is believed to be important in regulating ATPase activity and the flow of protons through the CF(0) complex. This chain is ATP synthase gamma chain, found in Nitrosomonas europaea (strain ATCC 19718 / CIP 103999 / KCTC 2705 / NBRC 14298).